We begin with the raw amino-acid sequence, 92 residues long: Small ribosomal subunit protein uS17 (92 aa).

This sequence belongs to the universal ribosomal protein uS17 family. Part of the 30S ribosomal subunit.

Its function is as follows. One of the primary rRNA binding proteins, it binds specifically to the 5'-end of 16S ribosomal RNA. The chain is Small ribosomal subunit protein uS17 from Bordetella petrii (strain ATCC BAA-461 / DSM 12804 / CCUG 43448).